A 533-amino-acid chain; its full sequence is DnaJ homolog subfamily C member 21 (533 aa).

The J domain occupies 3 to 70 (CHYEALGVRR…ERAWYDNHRE (68 aa)). 3 disordered regions span residues 278–311 (QFGDGSGEDEAEDQELRDGQDGKDSDEAEDAELY), 327–473 (KAMR…RVPA), and 503–533 (KATGHARAPSSSTSLNSVTNSRNKKEKRKNR). A phosphoserine mark is found at serine 283 and serine 302. The span at 291-302 (QELRDGQDGKDS) shows a compositional bias: basic and acidic residues. The C2H2-type 1 zinc finger occupies 315 to 339 (YCPACDKSFKTEKAMRNHEKSKKHR). Residues 357–369 (SGPQTDENSLNAN) are compositionally biased toward polar residues. Serine 370 bears the Phosphoserine mark. Basic residues predominate over residues 381-392 (KLSRKQKKKKQK). Polar residues predominate over residues 393–403 (PAQNYDDNFNE). Over residues 455-464 (SKPKGKKAKD) the composition is skewed to basic residues. The C2H2-type 2 zinc finger occupies 484–508 (SCTTCHSEFPSRNKLFDHLKATGHA). Serine 512 carries the phosphoserine modification. Residues 512 to 523 (SSSTSLNSVTNS) show a composition bias toward low complexity. Residues 524-533 (RNKKEKRKNR) show a composition bias toward basic residues.

In terms of assembly, interacts with HSPA8, PA2G4 and ZNF622.

The protein resides in the cytoplasm. It is found in the nucleus. The protein localises to the nucleolus. Its function is as follows. May act as a co-chaperone for HSP70. May play a role in ribosomal RNA (rRNA) biogenesis, possibly in the maturation of the 60S subunit. Binds the precursor 45S rRNA. The chain is DnaJ homolog subfamily C member 21 (DNAJC21) from Bos taurus (Bovine).